Reading from the N-terminus, the 186-residue chain is uncharacterized protein (186 aa).

It to M.jannaschii MJ0208.

This is an uncharacterized protein from Methanocaldococcus jannaschii (strain ATCC 43067 / DSM 2661 / JAL-1 / JCM 10045 / NBRC 100440) (Methanococcus jannaschii).